The following is a 1205-amino-acid chain: Partitioning defective 3 homolog B (1205 aa).

Disordered regions lie at residues 83 to 104 (EPLH…PDAF) and 137 to 165 (VRRS…SLKL). A Phosphoserine modification is found at S100. Positions 201 to 289 (TRTVEISGEG…SPSVLLHVLP (89 aa)) constitute a PDZ 1 domain. The disordered stretch occupies residues 318 to 374 (VPPPVHGKSGLKTANLTGTDSPETDASASLQQNKSPRVPRLGGKPSSPSLSPLMGFG). Positions 329 to 352 (KTANLTGTDSPETDASASLQQNKS) are enriched in polar residues. A phosphoserine mark is found at S346, S352, and S368. Positions 356-374 (PRLGGKPSSPSLSPLMGFG) are enriched in low complexity. 2 PDZ domains span residues 383–468 (KIDL…VIAR) and 498–585 (EIPL…GMIQ). 7 positions are modified to phosphoserine: S635, S710, S728, S730, S746, S749, and S801. The segment at 707-743 (ASKSMDLVPDESKVHSLAGQKSESPSKDFGPTLGLKK) is disordered. Disordered regions lie at residues 784-921 (AIDK…KHQE) and 1111-1205 (PYYP…TAAV). The span at 806-822 (HSGQGALNCESAPQGNS) shows a compositional bias: polar residues. 2 stretches are compositionally biased toward basic and acidic residues: residues 838-865 (KEKE…DPER) and 881-921 (KKED…KHQE). S1184 carries the phosphoserine modification.

It belongs to the PAR3 family. Interacts with PARD6B. Interacts with INSC/inscuteable. Highly expressed in kidney, lung and skeletal muscle. Expressed at intermediate levels in brain, heart, placenta, liver and pancreas. Isoform 1 is predominant, while isoform 2 and isoform 3 are expressed at lower levels.

The protein resides in the endomembrane system. Its subcellular location is the cell junction. It is found in the tight junction. Putative adapter protein involved in asymmetrical cell division and cell polarization processes. May play a role in the formation of epithelial tight junctions. This is Partitioning defective 3 homolog B (PARD3B) from Homo sapiens (Human).